We begin with the raw amino-acid sequence, 105 residues long: Intracellular chorismate mutase (105 aa).

The Chorismate mutase domain occupies 23–105; that stretch reads SQPVPEIDTL…LRLGRGRLGH (83 aa). R61, V70, and E74 together coordinate chorismate.

As to quaternary structure, homodimer. Interacts with AroG.

It is found in the cytoplasm. The enzyme catalyses chorismate = prephenate. The protein operates within metabolic intermediate biosynthesis; prephenate biosynthesis; prephenate from chorismate: step 1/1. The formation of the complex with AroG activates the chorismate mutase activity. In terms of biological role, catalyzes the Claisen rearrangement of chorismate to prephenate. Probably involved in the aromatic amino acid biosynthesis. This is Intracellular chorismate mutase from Mycobacterium bovis (strain ATCC BAA-935 / AF2122/97).